Reading from the N-terminus, the 135-residue chain is Large ribosomal subunit protein uL16c (135 aa).

Belongs to the universal ribosomal protein uL16 family. In terms of assembly, part of the 50S ribosomal subunit.

It localises to the plastid. The protein resides in the chloroplast. This Daucus carota (Wild carrot) protein is Large ribosomal subunit protein uL16c.